A 550-amino-acid polypeptide reads, in one-letter code: tRNA modification GTPase MnmE (550 aa).

(6S)-5-formyl-5,6,7,8-tetrahydrofolate is bound by residues arginine 20, glutamate 78, and arginine 116. Residues 212 to 478 (GFSVVIVGKP…LLDKIFDIIS (267 aa)) enclose the TrmE-type G domain. A K(+)-binding site is contributed by asparagine 222. GTP contacts are provided by residues 222–227 (NVGKST), 241–247 (TDIPGTT), and 266–269 (DTAG). Serine 226 is a binding site for Mg(2+). Residues threonine 241, isoleucine 243, and threonine 246 each contribute to the K(+) site. Threonine 247 lines the Mg(2+) pocket. Residue lysine 550 coordinates (6S)-5-formyl-5,6,7,8-tetrahydrofolate.

Belongs to the TRAFAC class TrmE-Era-EngA-EngB-Septin-like GTPase superfamily. TrmE GTPase family. As to quaternary structure, homodimer. Heterotetramer of two MnmE and two MnmG subunits. The cofactor is K(+).

It localises to the cytoplasm. Exhibits a very high intrinsic GTPase hydrolysis rate. Involved in the addition of a carboxymethylaminomethyl (cmnm) group at the wobble position (U34) of certain tRNAs, forming tRNA-cmnm(5)s(2)U34. The chain is tRNA modification GTPase MnmE from Neorickettsia sennetsu (strain ATCC VR-367 / Miyayama) (Ehrlichia sennetsu).